Reading from the N-terminus, the 802-residue chain is Lon protease (802 aa).

The Lon N-terminal domain occupies 21–215 (LPLLPVRDII…KIIQILNAEI (195 aa)). An ATP-binding site is contributed by 367–374 (GPPGVGKT). A Lon proteolytic domain is found at 603 to 784 (ENDVGVATGL…DEVISLTIER (182 aa)). Residues Ser-690 and Lys-733 contribute to the active site.

The protein belongs to the peptidase S16 family. In terms of assembly, homohexamer. Organized in a ring with a central cavity.

Its subcellular location is the cytoplasm. The catalysed reaction is Hydrolysis of proteins in presence of ATP.. Functionally, ATP-dependent serine protease that mediates the selective degradation of mutant and abnormal proteins as well as certain short-lived regulatory proteins. Required for cellular homeostasis and for survival from DNA damage and developmental changes induced by stress. Degrades polypeptides processively to yield small peptide fragments that are 5 to 10 amino acids long. Binds to DNA in a double-stranded, site-specific manner. The sequence is that of Lon protease from Endomicrobium trichonymphae.